The chain runs to 206 residues: Probable metallo-hydrolase MJ0888 (206 aa).

Positions 55, 57, 59, 60, 130, 147, and 190 each coordinate Zn(2+).

It belongs to the metallo-beta-lactamase superfamily. Zn(2+) is required as a cofactor.

In Methanocaldococcus jannaschii (strain ATCC 43067 / DSM 2661 / JAL-1 / JCM 10045 / NBRC 100440) (Methanococcus jannaschii), this protein is Probable metallo-hydrolase MJ0888.